Reading from the N-terminus, the 164-residue chain is N5-carboxyaminoimidazole ribonucleotide mutase (164 aa).

Residues Ser13, Asp16, and Arg43 each coordinate substrate.

It belongs to the AIR carboxylase family. Class I subfamily.

The enzyme catalyses 5-carboxyamino-1-(5-phospho-D-ribosyl)imidazole + H(+) = 5-amino-1-(5-phospho-D-ribosyl)imidazole-4-carboxylate. It functions in the pathway purine metabolism; IMP biosynthesis via de novo pathway; 5-amino-1-(5-phospho-D-ribosyl)imidazole-4-carboxylate from 5-amino-1-(5-phospho-D-ribosyl)imidazole (N5-CAIR route): step 2/2. Functionally, catalyzes the conversion of N5-carboxyaminoimidazole ribonucleotide (N5-CAIR) to 4-carboxy-5-aminoimidazole ribonucleotide (CAIR). In Haemophilus influenzae (strain ATCC 51907 / DSM 11121 / KW20 / Rd), this protein is N5-carboxyaminoimidazole ribonucleotide mutase.